Here is a 554-residue protein sequence, read N- to C-terminus: Phenylalanine--tRNA ligase beta subunit (554 aa).

One can recognise a B5 domain in the interval Leu276–Gly351. Asp329, Asp335, Glu338, and Glu339 together coordinate Mg(2+).

This sequence belongs to the phenylalanyl-tRNA synthetase beta subunit family. Type 2 subfamily. In terms of assembly, tetramer of two alpha and two beta subunits. The cofactor is Mg(2+).

It localises to the cytoplasm. It carries out the reaction tRNA(Phe) + L-phenylalanine + ATP = L-phenylalanyl-tRNA(Phe) + AMP + diphosphate + H(+). The polypeptide is Phenylalanine--tRNA ligase beta subunit (Methanococcus maripaludis (strain C7 / ATCC BAA-1331)).